The following is a 205-amino-acid chain: Urease accessory protein UreG (205 aa).

Position 11 to 18 (G11 to T18) interacts with GTP.

Belongs to the SIMIBI class G3E GTPase family. UreG subfamily. In terms of assembly, homodimer. UreD, UreF and UreG form a complex that acts as a GTP-hydrolysis-dependent molecular chaperone, activating the urease apoprotein by helping to assemble the nickel containing metallocenter of UreC. The UreE protein probably delivers the nickel.

It is found in the cytoplasm. In terms of biological role, facilitates the functional incorporation of the urease nickel metallocenter. This process requires GTP hydrolysis, probably effectuated by UreG. This is Urease accessory protein UreG from Prochlorococcus marinus (strain NATL2A).